The primary structure comprises 488 residues: Ribulose bisphosphate carboxylase large chain (488 aa).

2 residues coordinate substrate: Asn128 and Thr178. Lys180 serves as the catalytic Proton acceptor. Substrate is bound at residue Lys182. 3 residues coordinate Mg(2+): Lys206, Asp208, and Glu209. An N6-carboxylysine modification is found at Lys206. Catalysis depends on His298, which acts as the Proton acceptor. Substrate is bound by residues Arg299, His331, and Ser383.

Belongs to the RuBisCO large chain family. Type I subfamily. Heterohexadecamer of 8 large chains and 8 small chains. Requires Mg(2+) as cofactor.

It carries out the reaction 2 (2R)-3-phosphoglycerate + 2 H(+) = D-ribulose 1,5-bisphosphate + CO2 + H2O. It catalyses the reaction D-ribulose 1,5-bisphosphate + O2 = 2-phosphoglycolate + (2R)-3-phosphoglycerate + 2 H(+). Functionally, ruBisCO catalyzes two reactions: the carboxylation of D-ribulose 1,5-bisphosphate, the primary event in carbon dioxide fixation, as well as the oxidative fragmentation of the pentose substrate. Both reactions occur simultaneously and in competition at the same active site. The protein is Ribulose bisphosphate carboxylase large chain of Variovorax paradoxus (strain S110).